A 138-amino-acid chain; its full sequence is Dehydratase iacD (138 aa).

The EthD domain maps to 18-113; that stretch reads GVSEEDFIEW…LKDQDVWMDN (96 aa).

The protein belongs to the tpcK family.

It participates in secondary metabolite biosynthesis. In terms of biological role, dehydratase; part of the gene cluster that mediates the biosynthesis of iso-A82775C, a enylepoxycyclohexane and biosynthetic precursor of the chloropestolide anticancer natural products. Within the cluster, the prenyltransferase iacE prenylates siccayne to generate pestalodiol E, using dimethylallyl diphosphate (DMAPP) as cosubstrate. The probable oxidoreductase iacF is then involved in the epoxidation of pestalodiol F to pestalodiol F, which is further converted to pestalofone A by the short-chain dehydrogenase/reductase iacG. Iso-A82775C is subsequently generated from pestalofone A by the short-chain dehydrogenase/reductase iacC. Iso-A82775C is further condensed with maldoxin via a Diels-Alder reaction to produce the anticancer natural products chloropestolides A to E. The polypeptide is Dehydratase iacD (Pestalotiopsis fici (strain W106-1 / CGMCC3.15140)).